A 222-amino-acid chain; its full sequence is Small ribosomal subunit protein uS5 (222 aa).

Residues 1–41 (MAEQAGAGSAQDNRGGGRDDRGGRGRRDDRGGRGGRDDREK) are disordered. The span at 15 to 41 (GGGRDDRGGRGRRDDRGGRGGRDDREK) shows a compositional bias: basic and acidic residues. The 64-residue stretch at 44–107 (YLERVVTINR…EEARKNFFRV (64 aa)) folds into the S5 DRBM domain.

The protein belongs to the universal ribosomal protein uS5 family. In terms of assembly, part of the 30S ribosomal subunit. Contacts proteins S4 and S8.

Functionally, with S4 and S12 plays an important role in translational accuracy. Its function is as follows. Located at the back of the 30S subunit body where it stabilizes the conformation of the head with respect to the body. This is Small ribosomal subunit protein uS5 from Mycolicibacterium gilvum (strain PYR-GCK) (Mycobacterium gilvum (strain PYR-GCK)).